Consider the following 526-residue polypeptide: Rho guanine nucleotide exchange factor 3 (526 aa).

Residues 20–40 (ELPPASGPAKDAEEPSNKRVK) are disordered. A phosphoserine mark is found at serine 47 and serine 70. Positions 122–304 (KRQEAIFELS…QGIVAEINTK (183 aa)) constitute a DH domain. The region spanning 291–449 (INIIQGIVAE…WLNCIRQAKE (159 aa)) is the PH domain. The disordered stretch occupies residues 464–526 (EGSFLNPTTG…GNSRHGESNV (63 aa)). Residues 466–475 (SFLNPTTGSR) show a composition bias toward polar residues.

As to quaternary structure, interacts with RHOA and RHOB. As to expression, widely expressed. Highest levels are found in adult brain and skeletal muscle. Lower levels are found in heart and kidney.

It localises to the cytoplasm. Acts as a guanine nucleotide exchange factor (GEF) for RhoA and RhoB GTPases. In Homo sapiens (Human), this protein is Rho guanine nucleotide exchange factor 3 (ARHGEF3).